The sequence spans 363 residues: MGFKCGIVGLPNVGKSTLFNALTKAGIEAANYPFCTIEPNTGVVPMPDPRLDALAEIVKPERVLPTTMEFVDIAGLVAGASKGEGLGNKFLANIRETDAIGHVVRCFENDDIVHVAGQINPAEDIDTINTELALADLDSCERAIQRLQKRAKGGDKDAKFELSIMEKILPVLENAGMIRSIDLDKDELQAIKGYNFLTLKPTMYIANVNEDGFENNPYLDRVREIAEKEGAVVVPVCAAIESEIAELDDDEKIEFLQDLGIEEPGLNRVIRAGYKLLNLQTYFTAGVKEVRAWTIPIGATAPKSAAVIHTDFEKGFIRAEVIAYDDFIQYKGEAGAKEAGKWRLEGKDYIVQDGDVMHFRFNV.

The OBG-type G domain maps to 3 to 256; the sequence is FKCGIVGLPN…LDDDEKIEFL (254 aa). An ATP-binding site is contributed by 12-17; it reads NVGKST. Ser16 and Thr36 together coordinate Mg(2+). In terms of domain architecture, TGS spans 278 to 361; the sequence is NLQTYFTAGV…QDGDVMHFRF (84 aa).

The protein belongs to the TRAFAC class OBG-HflX-like GTPase superfamily. OBG GTPase family. YchF/OLA1 subfamily. It depends on Mg(2+) as a cofactor.

Its function is as follows. ATPase that binds to both the 70S ribosome and the 50S ribosomal subunit in a nucleotide-independent manner. The protein is Ribosome-binding ATPase YchF of Pasteurella multocida (strain Pm70).